Here is a 283-residue protein sequence, read N- to C-terminus: NFU1 iron-sulfur cluster scaffold homolog, mitochondrial (283 aa).

The transit peptide at methionine 1–arginine 65 directs the protein to the mitochondrion. Residues isoleucine 182–valine 250 are nifU. Cysteine 219 and cysteine 222 together coordinate [4Fe-4S] cluster.

Belongs to the NifU family.

It is found in the mitochondrion. Its function is as follows. Molecular scaffold for [Fe-S] cluster assembly of mitochondrial iron-sulfur proteins. This is NFU1 iron-sulfur cluster scaffold homolog, mitochondrial from Drosophila simulans (Fruit fly).